Consider the following 571-residue polypeptide: Streptolysin O (571 aa).

The first 33 residues, 1–33, serve as a signal peptide directing secretion; sequence MSNKKTFKKYSRVAGLLTAALIIGNLVTANAES. The disordered stretch occupies residues 30–108; sequence NAESNKQNTA…KKSEEDHTEE (79 aa). Low complexity predominate over residues 37-48; the sequence is NTASTETTTTNE. 2 stretches are compositionally biased toward basic and acidic residues: residues 50-68 and 79-108; these read PKPE…KTDD and APKE…HTEE. Transmembrane regions (beta stranded) follow at residues 260–273, 280–289, 358–367, and 375–387; these read KSQI…NSKI, IDFKSISKGE, SNDVEAAFSA, and KTNG…LENS. A Conserved undecapeptide motif is present at residues 529 to 539; sequence ECTGLAWEWWR. Positions 561-562 match the Cholesterol binding motif; it reads TL.

Belongs to the cholesterol-dependent cytolysin family. Homooligomeric pore complex of 35 to 50 subunits; when inserted in the host membrane.

It is found in the secreted. Its subcellular location is the host cell membrane. In terms of biological role, a cholesterol-dependent toxin that causes cytolysis by forming pores in cholesterol containing host membranes. After binding to target membranes, the protein undergoes a major conformation change, leading to its insertion in the host membrane and formation of an oligomeric pore complex. Cholesterol is required for binding to host membranes, membrane insertion and pore formation; cholesterol binding is mediated by a Thr-Leu pair in the C-terminus. Can be reversibly inactivated by oxidation. This is Streptolysin O (slo) from Streptococcus pyogenes serotype M3 (strain ATCC BAA-595 / MGAS315).